A 506-amino-acid polypeptide reads, in one-letter code: MEGRGLSELFRNTSEDMFLKAMMENSMGVAAAAPSMEMMGFRNLSQGFREDSEELFNSWLMNGEIPGFSAMNNRPRQPSRLSSEAAGFPNQQHEIAQEHFPTDNLIPQNLAVHSEFTMNHNQQQLKNAAEKGMQASDLLLAKAWFHSTQPMTRSRSSELRKRYAAMQSNMPPITTETIETANKLRQDLTNASTVNSAPMSNTPSQTPTFVSPSSSSTSPLDNPHIVAQDTITSVVSMLKDTLERKKLSSHANGDTSSGISFGFYDSQHFQQNILGGTDIFPLVTTSQIQDSVMLPKVERPTEQGSGNFVAPANQVWLGTASREPSQSGSSTAIPAPSAGFEVCDDLPPIGQAMTVCESTRTNAANGNGTADCRSKGKDFRERILKENLKDDRKKGSLTRMGSISSEQADKGDPTKKRRVERSRKMAEAKERSSTPVIPSDIQVVLKRCETLEKEVRSLKLNLSFMNRKDSEQTKQIEELQKQNEDLVEEKERLLEEIERIVSDTNT.

Disordered stretches follow at residues 193–223 (TVNS…LDNP) and 385–434 (KENL…RSST). A compositionally biased stretch (low complexity) spans 202 to 219 (TPSQTPTFVSPSSSSTSP). Residues 385 to 394 (KENLKDDRKK) show a composition bias toward basic and acidic residues. The short motif at 415-418 (KKRR) is the Nuclear localization signal element. Positions 422–432 (SRKMAEAKERS) are enriched in basic and acidic residues. Residues 441–506 (IQVVLKRCET…IERIVSDTNT (66 aa)) adopt a coiled-coil conformation.

This sequence belongs to the CYCLOPS family. Highly epressed in roots. Expressed at very low levels in leaves, stems and panicles.

It is found in the nucleus. In terms of biological role, involved in arbuscular mycorrhizal (AM) symbiosis. Required for fungal infection in roots and arbuscule development during AM symbiosis. In Oryza sativa subsp. japonica (Rice), this protein is Protein CYCLOPS.